The sequence spans 1042 residues: Ubiquitin carboxyl-terminal hydrolase 38 (1042 aa).

One can recognise a USP domain in the interval 445 to 949; it reads TGLINLGNTC…TAYVLLYKKQ (505 aa). The Nucleophile role is filled by C454. The active-site Proton acceptor is the H857.

It belongs to the peptidase C19 family. As to quaternary structure, interacts with isoform 1 of FBXW7; this interaction prevents FBXW7-mediated degradation of MYC.

Its subcellular location is the cytoplasm. The protein resides in the nucleus. The catalysed reaction is Thiol-dependent hydrolysis of ester, thioester, amide, peptide and isopeptide bonds formed by the C-terminal Gly of ubiquitin (a 76-residue protein attached to proteins as an intracellular targeting signal).. Its function is as follows. Deubiquitinating enzyme that plays a role in various cellular processes, including DNA repair, cell cycle regulation, and immune response. Plays a role in the inhibition of type I interferon signaling by mediating the 'Lys-33' to 'Lys-48' ubiquitination transition of TBK1 leading to its degradation. Cleaves the ubiquitin chain from the histone demethylase LSD1/KDM1A and prevents it from degradation by the 26S proteasome, thus maintaining LSD1 protein level in cells. Plays a role in the DNA damage response by regulating the deacetylase activity of HDAC1. Mechanistically, removes the 'Lys-63'-linked ubiquitin chain promoting the deacetylase activity of HDAC1 in response to DNA damage. Also acts as a specific deubiquitinase of histone deacetylase 3/HDAC3 and cleaves its 'Lys-63'-linked ubiquitin chains to lower its histone deacetylase activity. Regulates MYC levels and cell proliferation via antagonizing ubiquitin E3 ligase FBXW7 thereby preventing MYC 'Lys-48'-linked ubiquitination and degradation. Participates in antiviral response by removing both 'Lys-48'-linked and 'Lys-63'-linked polyubiquitination of Zika virus envelope protein E. Constitutively associated with IL-33R/IL1RL1, deconjugates its 'Lys-27'-linked polyubiquitination resulting in its autophagic degradation. The protein is Ubiquitin carboxyl-terminal hydrolase 38 (Usp38) of Mus musculus (Mouse).